The sequence spans 410 residues: Beta-arrestin-2 (410 aa).

Tyr48 carries the post-translational modification Phosphotyrosine. 2 positions are modified to hydroxyproline; by PHD2: Pro176 and Pro181. The interaction with TRAF6 stretch occupies residues 241-410 (ADICLFSTAQ…KDDDCDDQFC (170 aa)). Residue Ser361 is modified to Phosphoserine. Positions 364–410 (RETDVPVDTNLIEFDTNYATDDDIVFEDFARLRLKGMKDDDCDDQFC) are interaction with AP2B1. Thr383 is subject to Phosphothreonine. Residues 386–396 (DIVFEDFARLR) carry the [DE]-X(1,2)-F-X-X-[FL]-X-X-X-R motif motif.

Belongs to the arrestin family. In terms of assembly, homooligomer; the self-association is mediated by InsP6-binding. Heterooligomer with ARRB1; the association is mediated by InsP6-binding. Interacts with ADRB2 and CHRM2. Interacts with PDE4A. Interacts with PDE4D. Interacts with MAPK10, MAPK1 and MAPK3. Interacts with DRD2. Interacts with FSHR. Interacts with CLTC. Interacts with HTR2C. Interacts with CCR5. Interacts with CXCR4. Interacts with SRC. Interacts with DUSP16; the interaction is interrupted by stimulation of AGTR1 and activation of MAPK10. Interacts with CHUK; the interaction is enhanced stimulation of ADRB2. Interacts with RELA. Interacts with MDM2; the interaction is enhanced by activation of GPCRs. Interacts with SLC9A5. Interacts with TRAF6. Interacts with IGF1R. Interacts with ENG. Interacts with ARRB2. Interacts with KIR2DL1, KIR2DL3 and KIR2DL4. Interacts with LDLR. Interacts with AP2B1. Interacts with C5AR1. Interacts with RAF1. Interacts with MAP2K1. Interacts with MAPK1. Interacts with MAPK10; the interaction enhances MAPK10 activation by MAP3K5. Interacts with MAP2K4; the interaction is enhanced by presence of MAP3K5 and MAPK10. Interacts with MAP3K5. Interacts with AKT1. Interacts with IKBKB and MAP3K14. Interacts with SMO (activated). Interacts with GSK3A and GSK3B. Interacts with CXCR4; the interaction is dependent on C-terminal phosphorylation of CXCR4 and allows activation of MAPK1 and MAPK3. Interacts with GPR143. Interacts with HCK and CXCR1 (phosphorylated). Associates with protein phosphatase 2A (PP2A). Interacts with ACKR3 and ACKR4. Interacts with ARRDC1; the interaction is direct. Interacts with GPR61, GPR62 and GPR135. Interacts (via NACHT and LRR domains) with NLRP3; this interaction is direct and inducible by omega-3 polyunsaturated fatty acids (PUFAs). Interacts with FFAR4 (via C-terminus); this interaction is stimulated by long-chain fatty acids (LCFAs). Interacts with GPR35. Interacts with GPR84. Interacts with TIGIT; this interaction inhibits the NF-kappa-B pathway. Interacts with TGFBR3. Post-translationally, phosphorylated at Thr-383 in the cytoplasm; probably dephosphorylated at the plasma membrane. The phosphorylation does not regulate internalization and recycling of ADRB2, interaction with clathrin or AP2B1. In terms of processing, the ubiquitination status appears to regulate the formation and trafficking of beta-arrestin-GPCR complexes and signaling. Ubiquitination appears to occur GPCR-specific. Ubiquitinated by MDM2; the ubiquitination is required for rapid internalization of ADRB2. Deubiquitinated by USP33; the deubiquitination leads to a dissociation of the beta-arrestin-GPCR complex. Stimulation of a class A GPCR, such as ADRB2, induces transient ubiquitination and subsequently promotes association with USP33. Stimulation of a class B GPCR promotes a sustained ubiquitination. Deubiquitinated by USP20; allowing USP20 to deubiquitinate TRAF6 leading to inhibition of NF-kappa-B signaling. Hydroxylation by PHD2 modulates the rate of internalization by slowing down recruitment to the plasma membrane and inhibiting subsequent co-internalization with class A receptors. Predominantly localized in neuronal tissues and in the spleen.

The protein localises to the cytoplasm. It is found in the nucleus. It localises to the cell membrane. The protein resides in the membrane. Its subcellular location is the clathrin-coated pit. The protein localises to the cytoplasmic vesicle. In terms of biological role, functions in regulating agonist-mediated G-protein coupled receptor (GPCR) signaling by mediating both receptor desensitization and resensitization processes. During homologous desensitization, beta-arrestins bind to the GPRK-phosphorylated receptor and sterically preclude its coupling to the cognate G-protein; the binding appears to require additional receptor determinants exposed only in the active receptor conformation. The beta-arrestins target many receptors for internalization by acting as endocytic adapters (CLASPs, clathrin-associated sorting proteins) and recruiting the GPRCs to the adapter protein 2 complex 2 (AP-2) in clathrin-coated pits (CCPs). However, the extent of beta-arrestin involvement appears to vary significantly depending on the receptor, agonist and cell type. Internalized arrestin-receptor complexes traffic to intracellular endosomes, where they remain uncoupled from G-proteins. Two different modes of arrestin-mediated internalization occur. Class A receptors, like ADRB2, OPRM1, ENDRA, D1AR and ADRA1B dissociate from beta-arrestin at or near the plasma membrane and undergo rapid recycling. Class B receptors, like AVPR2, AGTR1, NTSR1, TRHR and TACR1 internalize as a complex with arrestin and traffic with it to endosomal vesicles, presumably as desensitized receptors, for extended periods of time. Receptor resensitization then requires that receptor-bound arrestin is removed so that the receptor can be dephosphorylated and returned to the plasma membrane. Mediates endocytosis of CCR7 following ligation of CCL19 but not CCL21. Involved in internalization of P2RY1, P2RY4, P2RY6 and P2RY11 and ATP-stimulated internalization of P2RY2. Involved in phosphorylation-dependent internalization of OPRD1 and subsequent recycling or degradation. Involved in ubiquitination of IGF1R. Beta-arrestins function as multivalent adapter proteins that can switch the GPCR from a G-protein signaling mode that transmits short-lived signals from the plasma membrane via small molecule second messengers and ion channels to a beta-arrestin signaling mode that transmits a distinct set of signals that are initiated as the receptor internalizes and transits the intracellular compartment. Acts as a signaling scaffold for MAPK pathways such as MAPK1/3 (ERK1/2) and MAPK10 (JNK3). ERK1/2 and JNK3 activated by the beta-arrestin scaffold are largely excluded from the nucleus and confined to cytoplasmic locations such as endocytic vesicles, also called beta-arrestin signalosomes. Acts as a signaling scaffold for the AKT1 pathway. GPCRs for which the beta-arrestin-mediated signaling relies on both ARRB1 and ARRB2 (codependent regulation) include ADRB2, F2RL1 and PTH1R. For some GPCRs the beta-arrestin-mediated signaling relies on either ARRB1 or ARRB2 and is inhibited by the other respective beta-arrestin form (reciprocal regulation). Increases ERK1/2 signaling in AGTR1- and AVPR2-mediated activation (reciprocal regulation). Involved in CCR7-mediated ERK1/2 signaling involving ligand CCL19. Is involved in type-1A angiotensin II receptor/AGTR1-mediated ERK activity. Is involved in type-1A angiotensin II receptor/AGTR1-mediated MAPK10 activity. Is involved in dopamine-stimulated AKT1 activity in the striatum by disrupting the association of AKT1 with its negative regulator PP2A. Involved in AGTR1-mediated chemotaxis. Appears to function as signaling scaffold involved in regulation of MIP-1-beta-stimulated CCR5-dependent chemotaxis. Involved in attenuation of NF-kappa-B-dependent transcription in response to GPCR or cytokine stimulation by interacting with and stabilizing CHUK. Suppresses UV-induced NF-kappa-B-dependent activation by interacting with CHUK. The function is promoted by stimulation of ADRB2 and dephosphorylation of ARRB2. Involved in IL8-mediated granule release in neutrophils. Involved in p53/TP53-mediated apoptosis by regulating MDM2 and reducing the MDM2-mediated degradation of p53/TP53. May serve as nuclear messenger for GPCRs. Upon stimulation of OR1D2, may be involved in regulation of gene expression during the early processes of fertilization. Also involved in regulation of receptors other than GPCRs. Involved in endocytosis of TGFBR2 and TGFBR3 and down-regulates TGF-beta signaling such as NF-kappa-B activation. Involved in endocytosis of low-density lipoprotein receptor/LDLR. Involved in endocytosis of smoothened homolog/Smo, which also requires GRK2. Involved in endocytosis of SLC9A5. Involved in endocytosis of ENG and subsequent TGF-beta-mediated ERK activation and migration of epithelial cells. Involved in Toll-like receptor and IL-1 receptor signaling through the interaction with TRAF6 which prevents TRAF6 autoubiquitination and oligomerization required for activation of NF-kappa-B and JUN. Involved in insulin resistance by acting as insulin-induced signaling scaffold for SRC, AKT1 and INSR. Involved in regulation of inhibitory signaling of natural killer cells by recruiting PTPN6 and PTPN11 to KIR2DL1. Involved in the internalization of the atypical chemokine receptor ACKR3. Acts as an adapter protein coupling FFAR4 receptor to specific downstream signaling pathways, as well as mediating receptor endocytosis. During the activation step of NLRP3 inflammasome, directly associates with NLRP3 leading to inhibition of pro-inflammatory cytokine release and inhibition of inflammation. In Mus musculus (Mouse), this protein is Beta-arrestin-2 (Arrb2).